We begin with the raw amino-acid sequence, 250 residues long: UPF0259 membrane protein bbp_256 (250 aa).

The next 6 helical transmembrane spans lie at P21–I41, F86–T106, F125–L145, Y146–I166, I188–S208, and F216–Y236.

Belongs to the UPF0259 family.

The protein resides in the cell membrane. The sequence is that of UPF0259 membrane protein bbp_256 from Buchnera aphidicola subsp. Baizongia pistaciae (strain Bp).